The following is a 197-amino-acid chain: Imidazoleglycerol-phosphate dehydratase (197 aa).

The protein belongs to the imidazoleglycerol-phosphate dehydratase family.

The protein localises to the cytoplasm. It carries out the reaction D-erythro-1-(imidazol-4-yl)glycerol 3-phosphate = 3-(imidazol-4-yl)-2-oxopropyl phosphate + H2O. Its pathway is amino-acid biosynthesis; L-histidine biosynthesis; L-histidine from 5-phospho-alpha-D-ribose 1-diphosphate: step 6/9. This Chromohalobacter salexigens (strain ATCC BAA-138 / DSM 3043 / CIP 106854 / NCIMB 13768 / 1H11) protein is Imidazoleglycerol-phosphate dehydratase.